Reading from the N-terminus, the 220-residue chain is Adenylate kinase (220 aa).

10-15 (GAGKGT) serves as a coordination point for ATP. An NMP region spans residues 30–59 (STGDMLRAAVKAGTPLGVEAKGYMDAGKLV). AMP contacts are provided by residues Thr31, Arg36, 57-59 (KLV), 85-88 (GFPR), and Gln92. The LID stretch occupies residues 122–159 (GRRTHPASGRTYHVKFNPPKVEGHDDVTGEPLIQRDDD). Residues Arg123 and 132 to 133 (TY) each bind ATP. Positions 156 and 167 each coordinate AMP. Residue Gly206 coordinates ATP.

It belongs to the adenylate kinase family. Monomer.

It is found in the cytoplasm. The enzyme catalyses AMP + ATP = 2 ADP. Its pathway is purine metabolism; AMP biosynthesis via salvage pathway; AMP from ADP: step 1/1. Its function is as follows. Catalyzes the reversible transfer of the terminal phosphate group between ATP and AMP. Plays an important role in cellular energy homeostasis and in adenine nucleotide metabolism. The protein is Adenylate kinase of Burkholderia lata (strain ATCC 17760 / DSM 23089 / LMG 22485 / NCIMB 9086 / R18194 / 383).